A 163-amino-acid chain; its full sequence is Lipoprotein signal peptidase (163 aa).

4 helical membrane passes run 5 to 25, 37 to 57, 67 to 87, and 91 to 111; these read VLTFLGISFVIIVLDLTTKSL, IIPGLFNLVLVWNKGAAFGML, LMLVGSSIIAAVITAGYVFKS, and LSNLEVLSLALICGGSVGNLY. Residues D121 and D139 contribute to the active site. Residues 132–152 traverse the membrane as a helical segment; it reads WPAFNVADASITIGIALFIGY.

Belongs to the peptidase A8 family.

It is found in the cell inner membrane. The enzyme catalyses Release of signal peptides from bacterial membrane prolipoproteins. Hydrolyzes -Xaa-Yaa-Zaa-|-(S,diacylglyceryl)Cys-, in which Xaa is hydrophobic (preferably Leu), and Yaa (Ala or Ser) and Zaa (Gly or Ala) have small, neutral side chains.. It functions in the pathway protein modification; lipoprotein biosynthesis (signal peptide cleavage). Its function is as follows. This protein specifically catalyzes the removal of signal peptides from prolipoproteins. This is Lipoprotein signal peptidase from Sulfurihydrogenibium sp. (strain YO3AOP1).